The chain runs to 402 residues: Heat stress transcription factor A-6a (402 aa).

The segment at 1-28 is disordered; sequence MLKPQTPRARRAAHPNSHMASSSSSSSL. Residues 212-258 are a coiled coil; sequence EVVSLKRDRAALRAEVIMLKQQYNACKSQLIAMEEMVRNIERRQQQT. Residues 216-266 form a hydrophobic repeat HR-A/B region; sequence LKRDRAALRAEVIMLKQQYNACKSQLIAMEEMVRNIERRQQQTIGFFAKVL. The Nuclear localization signal signature appears at 290 to 293; that stretch reads KRQR. The AHA signature appears at 349 to 358; sequence DDVWEELDAL.

Belongs to the HSF family. Class A subfamily. Homotrimer. In terms of processing, exhibits temperature-dependent phosphorylation.

It localises to the nucleus. In terms of biological role, transcriptional regulator that specifically binds DNA of heat shock promoter elements (HSE). This Oryza sativa subsp. japonica (Rice) protein is Heat stress transcription factor A-6a (HSFA6B).